Here is a 420-residue protein sequence, read N- to C-terminus: RING finger protein 39 (420 aa).

An RING-type zinc finger spans residues 88–135 (CPLCGGSFEDPVLLACEHSFCRACLARRWGTPPATGTEASPTACPCCG). In terms of domain architecture, B30.2/SPRY spans 210-420 (DDLPEDYPVV…APLRIVPAES (211 aa)). Positions 246-265 (DRRSVQLAPPGTPAPPDGPK) are disordered.

It is found in the cytoplasm. It catalyses the reaction S-ubiquitinyl-[E2 ubiquitin-conjugating enzyme]-L-cysteine + [acceptor protein]-L-lysine = [E2 ubiquitin-conjugating enzyme]-L-cysteine + N(6)-ubiquitinyl-[acceptor protein]-L-lysine.. It participates in protein modification; protein ubiquitination. In terms of biological role, plays an inhibitory role in anti-RNA viral innate immunity by targeting the adapter DDX3X and promoting its 'Lys-48'-linked polyubiquitination. Alternatively, enhances the cGAS-STING pathway activation by promoting 'Lys-63'-linked ubiquitination of STING1, facilitating the STING1-TBK1 complex formation and STING1 activation. The polypeptide is RING finger protein 39 (RNF39) (Pan troglodytes (Chimpanzee)).